Consider the following 498-residue polypeptide: Angiopoietin-1 (498 aa).

Positions 1–19 (MTVFLSFAFLAAILTHIGC) are cleaved as a signal peptide. N92, N122, N154, N243, and N295 each carry an N-linked (GlcNAc...) asparagine glycan. Positions 158–254 (RLEIQLLENS…SVLQKQQLEL (97 aa)) form a coiled coil. A Fibrinogen C-terminal domain is found at 277–497 (KEEVKPFRDC…STTMMIRPLD (221 aa)). Cystine bridges form between C286–C315 and C439–C452.

Homooligomer. Interacts with TEK/TIE2. Interacts with SVEP1/polydom. Interacts with THBD; this interaction significantly inhibits the generation of activated PC and TAFIa/CPB2 by the thrombin/thrombomodulin complex.

It is found in the secreted. In terms of biological role, binds and activates TIE2 receptor by inducing its tyrosine phosphorylation. Implicated in endothelial developmental processes later and distinct from that of VEGF. Appears to play a crucial role in mediating reciprocal interactions between the endothelium and surrounding matrix and mesenchyme. Mediates blood vessel maturation/stability. It may play an important role in the heart early development. The polypeptide is Angiopoietin-1 (ANGPT1) (Sus scrofa (Pig)).